We begin with the raw amino-acid sequence, 306 residues long: UDP-3-O-acyl-N-acetylglucosamine deacetylase (306 aa).

3 residues coordinate Zn(2+): His79, His238, and Asp242. The active-site Proton donor is His265.

Belongs to the LpxC family. The cofactor is Zn(2+).

It catalyses the reaction a UDP-3-O-[(3R)-3-hydroxyacyl]-N-acetyl-alpha-D-glucosamine + H2O = a UDP-3-O-[(3R)-3-hydroxyacyl]-alpha-D-glucosamine + acetate. Its pathway is glycolipid biosynthesis; lipid IV(A) biosynthesis; lipid IV(A) from (3R)-3-hydroxytetradecanoyl-[acyl-carrier-protein] and UDP-N-acetyl-alpha-D-glucosamine: step 2/6. In terms of biological role, catalyzes the hydrolysis of UDP-3-O-myristoyl-N-acetylglucosamine to form UDP-3-O-myristoylglucosamine and acetate, the committed step in lipid A biosynthesis. In Shewanella pealeana (strain ATCC 700345 / ANG-SQ1), this protein is UDP-3-O-acyl-N-acetylglucosamine deacetylase.